The chain runs to 121 residues: Small ribosomal subunit protein uS13 (121 aa).

The disordered stretch occupies residues 94 to 121; that stretch reads GLPLRGQRTRTNARTRKGPRRAAQSLKK.

It belongs to the universal ribosomal protein uS13 family. In terms of assembly, part of the 30S ribosomal subunit. Forms a loose heterodimer with protein S19. Forms two bridges to the 50S subunit in the 70S ribosome.

In terms of biological role, located at the top of the head of the 30S subunit, it contacts several helices of the 16S rRNA. In the 70S ribosome it contacts the 23S rRNA (bridge B1a) and protein L5 of the 50S subunit (bridge B1b), connecting the 2 subunits; these bridges are implicated in subunit movement. Contacts the tRNAs in the A and P-sites. This Paraburkholderia phytofirmans (strain DSM 17436 / LMG 22146 / PsJN) (Burkholderia phytofirmans) protein is Small ribosomal subunit protein uS13.